A 313-amino-acid polypeptide reads, in one-letter code: Malate dehydrogenase (313 aa).

NAD(+)-binding positions include 11–16 and Asp35; that span reads GAGNIG. Residues Arg84 and Arg90 each contribute to the substrate site. Residues Asn97 and 120–122 each bind NAD(+); that span reads VTN. 2 residues coordinate substrate: Asn122 and Arg153. The active-site Proton acceptor is the His177.

It belongs to the LDH/MDH superfamily. MDH type 3 family.

It catalyses the reaction (S)-malate + NAD(+) = oxaloacetate + NADH + H(+). Its function is as follows. Catalyzes the reversible oxidation of malate to oxaloacetate. The protein is Malate dehydrogenase of Ehrlichia canis (strain Jake).